The chain runs to 273 residues: Pyrroline-5-carboxylate reductase (273 aa).

This sequence belongs to the pyrroline-5-carboxylate reductase family.

It is found in the cytoplasm. The enzyme catalyses L-proline + NADP(+) = (S)-1-pyrroline-5-carboxylate + NADPH + 2 H(+). It catalyses the reaction L-proline + NAD(+) = (S)-1-pyrroline-5-carboxylate + NADH + 2 H(+). Its pathway is amino-acid biosynthesis; L-proline biosynthesis; L-proline from L-glutamate 5-semialdehyde: step 1/1. This Pisum sativum (Garden pea) protein is Pyrroline-5-carboxylate reductase (PROC).